Consider the following 348-residue polypeptide: Phosphoribosylformylglycinamidine cyclo-ligase (348 aa).

It belongs to the AIR synthase family.

It is found in the cytoplasm. It carries out the reaction 2-formamido-N(1)-(5-O-phospho-beta-D-ribosyl)acetamidine + ATP = 5-amino-1-(5-phospho-beta-D-ribosyl)imidazole + ADP + phosphate + H(+). It functions in the pathway purine metabolism; IMP biosynthesis via de novo pathway; 5-amino-1-(5-phospho-D-ribosyl)imidazole from N(2)-formyl-N(1)-(5-phospho-D-ribosyl)glycinamide: step 2/2. In Geobacter metallireducens (strain ATCC 53774 / DSM 7210 / GS-15), this protein is Phosphoribosylformylglycinamidine cyclo-ligase.